A 268-amino-acid chain; its full sequence is Tryptophan synthase alpha chain (268 aa).

Catalysis depends on proton acceptor residues Glu49 and Asp60.

It belongs to the TrpA family. In terms of assembly, tetramer of two alpha and two beta chains.

The catalysed reaction is (1S,2R)-1-C-(indol-3-yl)glycerol 3-phosphate + L-serine = D-glyceraldehyde 3-phosphate + L-tryptophan + H2O. It participates in amino-acid biosynthesis; L-tryptophan biosynthesis; L-tryptophan from chorismate: step 5/5. Functionally, the alpha subunit is responsible for the aldol cleavage of indoleglycerol phosphate to indole and glyceraldehyde 3-phosphate. This chain is Tryptophan synthase alpha chain, found in Xanthomonas oryzae pv. oryzae (strain PXO99A).